The following is a 202-amino-acid chain: Protein G1-like4 (202 aa).

Disordered stretches follow at residues 1 to 44 (MDLS…RYEA) and 158 to 202 (RARG…GAAC). A compositionally biased stretch (gly residues) spans 12 to 22 (SGGGNGGGGGS). The span at 23–36 (SSSNSSPSMGAGAP) shows a compositional bias: low complexity. The ALOG domain occupies 41–168 (RYEAQKRRDW…ARGVSYEKKK (128 aa)). The Nuclear localization signal signature appears at 166–170 (KKKRK). Positions 173–186 (QQQQLQGGDSSGLH) are enriched in low complexity. The segment covering 192–202 (PPPPPPAGAAC) has biased composition (pro residues).

This sequence belongs to the plant homeotic and developmental regulators ALOG protein family.

It is found in the nucleus. Its function is as follows. Probable transcription regulator that acts as a developmental regulator by promoting cell growth in response to light. The protein is Protein G1-like4 of Oryza sativa subsp. indica (Rice).